The chain runs to 1025 residues: MVAMAEAEAGVAVEVRGLPPAVPDELLTLYFENRRRSGGGPVLSWQRLGCGGVLTFREPADAERVLAQADHELHGAQLSLRPAPPRAPARLLLQGLPPGTTPQRLEQHVQALLRASGLPVQPCCALASPRPDRALVQLPKPLSEADVRVLEEQAQNLGLEGTLVSLARVPQARAVRVVGDGASVDLLLLELYLENERRSGGGPLEDLQRLPGPLGTVASFQQWQVAERVLQQEHRLQGSELSLVPHYDILEPEELAENTSGGDHPSTQGPRATKHALLRTGGLVTALQGAGTVTMGSGEEPGQSGASLRTGPMVQGRGIMTTGSGQEPGQSGTSLRTGPMGSLGQAEQVSSMPMGSLEHEGLVSLRPVGLQEQEGPMSLGPVGSAGPVETSKGLLGQEGLVEIAMDSPEQEGLVGPMEITMGSLEKAGPVSPGCVKLAGQEGLVEMVLLMEPGAMRFLQLYHEDLLAGLGDVALLPLEGPDMTGFRLCGAQASCQAAEEFLRSLLGSISCHVLCLEHPGSARFLLGPEGQHLLQGLEAQFQCVFGTERLATATLDTGLEEVDPTEALPVLPGNAHTLWTPDSTGGDQEDVSLEEVRELLATLEGLDLDGEDWLPRELEEEGPQEQPEEEVTPGHEEEEPVAPSTVAPRWLEEEAALQLALHRSLEPQGQVAEQEEAAALRQALTLSLLEQPPLEAEEPPDGGTDGKAQLVVHSAFEQDVEELDRALRAALEVHVQEETVGPWRRTLPAELRARLERCHGVSVALRGDCTILRGFGAHPARAARHLVALLAGPWDQSLAFPLAASGPTLAGQTLKGPWNNLERLAENTGEFQEVVRAFYDTLDAARSSIRVVRVERVSHPLLQQQYELYRERLLQRCERRPVEQVLYHGTTAPAVPDICAHGFNRSFCGRNATVYGKGVYFARRASLSVQDRYSPPNADGHKAVFVARVLTGDYGQGRRGLRAPPLRGPGHVLLRYDSAVDCICQPSIFVIFHDTQALPTHLITCEHVPRASPDDPSGLPGRSPDT.

T101 is modified (phosphothreonine). E106 carries the post-translational modification ADP-ribosyl glutamic acid. K140 is subject to N6-(ADP-ribosyl)lysine. The disordered stretch occupies residues 318–346 (GIMTTGSGQEPGQSGTSLRTGPMGSLGQA). Residues 321–336 (TTGSGQEPGQSGTSLR) show a composition bias toward polar residues. Phosphoserine is present on residues S378, S423, and S431. Disordered stretches follow at residues 569–589 (VLPG…DQED) and 617–644 (LEEE…APST). Residues 617–639 (LEEEGPQEQPEEEVTPGHEEEEP) are compositionally biased toward acidic residues. 2 short sequence motifs (ubiquitin-interacting) span residues 650 to 667 (LEEE…LEPQ) and 673 to 690 (QEEA…LLEQ). The residue at position 663 (S663) is a Phosphoserine. The interval 700 to 907 (DGGTDGKAQL…CAHGFNRSFC (208 aa)) is myc binding. A PARP catalytic domain is found at 806–1025 (PTLAGQTLKG…SGLPGRSPDT (220 aa)). Positions 831–838 (QEVVRAFY) match the PIP-box motif. Position 882 is an ADP-ribosyl glutamic acid (E882). Residue K916 is modified to N6-(ADP-ribosyl)lysine. K916 bears the N6-acetyllysine mark. The interval 1006-1025 (HVPRASPDDPSGLPGRSPDT) is disordered. Residue S1011 is modified to Phosphoserine.

The protein belongs to the ARTD/PARP family. Interacts with MYC. Interacts with PARP14. Interacts (via-PIP box and ubiquitin-interacting motifs) with PCNA. In terms of processing, stimulated through its phosphorylation by CDK2. Acquires CDK-dependent phosphorylation through late-G1 to S phase, and from prometaphase to cytokinesis in the nucleolar organizing regions. Phosphorylation is suppressed in growth-arrested cells. Post-translationally, auto-mono-ADP-ribosylated on glutamate and lysine residues. In terms of tissue distribution, highly expressed in spleen and thymus. Intermediate levels in liver, kidney, pancreas, prostate, testis, ovary, intestine, and leukocytes. Low expression in heart, brain, placenta, lung, skeletal muscle, and colon.

Its subcellular location is the nucleus. It is found in the nucleolus. The protein resides in the cytoplasm. It catalyses the reaction L-lysyl-[protein] + NAD(+) = N(6)-(ADP-D-ribosyl)-L-lysyl-[protein] + nicotinamide + H(+). The enzyme catalyses L-aspartyl-[protein] + NAD(+) = 4-O-(ADP-D-ribosyl)-L-aspartyl-[protein] + nicotinamide. The catalysed reaction is L-glutamyl-[protein] + NAD(+) = 5-O-(ADP-D-ribosyl)-L-glutamyl-[protein] + nicotinamide. ADP-ribosyltransferase that mediates mono-ADP-ribosylation of glutamate and aspartate residues on target proteins. In contrast to PARP1 and PARP2, it is not able to mediate poly-ADP-ribosylation. Catalyzes mono-ADP-ribosylation of GSK3B, leading to negatively regulate GSK3B kinase activity. Involved in translesion DNA synthesis in response to DNA damage via its interaction with PCNA. This is Protein mono-ADP-ribosyltransferase PARP10 from Homo sapiens (Human).